A 544-amino-acid chain; its full sequence is Chaperonin GroEL 1 (544 aa).

ATP is bound by residues 30–33 (TLGP), Lys-51, 87–91 (DGTTT), Gly-415, 481–483 (DAL), and Asp-497.

It belongs to the chaperonin (HSP60) family. In terms of assembly, forms a cylinder of 14 subunits composed of two heptameric rings stacked back-to-back. Interacts with the co-chaperonin GroES.

The protein resides in the cytoplasm. It catalyses the reaction ATP + H2O + a folded polypeptide = ADP + phosphate + an unfolded polypeptide.. Its function is as follows. Together with its co-chaperonin GroES, plays an essential role in assisting protein folding. The GroEL-GroES system forms a nano-cage that allows encapsulation of the non-native substrate proteins and provides a physical environment optimized to promote and accelerate protein folding. In Chlamydia pneumoniae (Chlamydophila pneumoniae), this protein is Chaperonin GroEL 1.